Consider the following 287-residue polypeptide: Damage-control phosphatase PH1575 (287 aa).

The short motif at 7–10 is the Subfamily I CxxC motif element; that stretch reads CLTC. Mn(2+) contacts are provided by Asp156, Asn157, and Asp191. Residues 243–246 carry the Subfamily I GNFE motif motif; that stretch reads GNFE. A Subfamily I KC motif motif is present at residues 263–264; sequence KC.

Belongs to the damage-control phosphatase family. Nucleotides phosphatase I subfamily. The cofactor is Mn(2+). It depends on Ni(2+) as a cofactor. [2Fe-2S] cluster is required as a cofactor.

Its activity is regulated as follows. Activity is strongly promoted by Co(2+), Ni(2+), Mg(2+), Mn(2+), Ca(2+), Zn(2+) and Cu(2+). Activity is inhibited by EDTA. Metal-dependent phosphatase with probable damage-control functions. Shows phosphatase activity against p-nitrophenyl phosphate (pNPP), but natural substrates have not been identified yet. Low phosphatase activity against 8-oxo nucleotides suggests that it could hydrolyze oxidatively damaged purine nucleotides or their biosynthetic intermediates. The chain is Damage-control phosphatase PH1575 from Pyrococcus horikoshii (strain ATCC 700860 / DSM 12428 / JCM 9974 / NBRC 100139 / OT-3).